The primary structure comprises 127 residues: Glycine cleavage system H protein (127 aa).

Residues 24 to 105 (TALVGITDFA…YNEGWIVKMK (82 aa)) enclose the Lipoyl-binding domain. The residue at position 65 (Lys65) is an N6-lipoyllysine.

The protein belongs to the GcvH family. In terms of assembly, the glycine cleavage system is composed of four proteins: P, T, L and H. (R)-lipoate serves as cofactor.

Functionally, the glycine cleavage system catalyzes the degradation of glycine. The H protein shuttles the methylamine group of glycine from the P protein to the T protein. This chain is Glycine cleavage system H protein, found in Chlorobaculum tepidum (strain ATCC 49652 / DSM 12025 / NBRC 103806 / TLS) (Chlorobium tepidum).